The sequence spans 258 residues: Intron-associated endonuclease 2 (258 aa).

A GIY-YIG domain is found at 14 to 96; the sequence is SVAFTYMVRF…RKYFNNEFIL (83 aa).

This endonuclease is specific to the nrdD gene splice junction and is involved in intron homing. This is Intron-associated endonuclease 2 (ITEVIIR) from Escherichia coli (Bacteriophage T4).